Reading from the N-terminus, the 422-residue chain is MKFIDEVNVLVKAGKGGDGIISFRREANVDRGGPDGGNGGRGGNVYFRGDSGLNTLLAFHYQNKISAKDGESGKPKNAYGAAGADEIVKVPLGTLVYYEDNLIADVIEPKDYLIAKGGRGGRGNLMFKSAKNTAPRICENGESGEKFALRLVLKVLADVGLVGKPSAGKSSLLNALSNAKAKTADYDFTTLVPQLGMLKYYDKSCTIADLPGLIAQASEGKGLGFQFLKHIERCKVIAHVIDFGSSLKDPILDYETIKKELKDYNLNLEALPHVIIANKSDQEIFATNLKKFKKAYPTLPIVAISALYQKNLDELKAAIFKMLEQANQQTKSNVVENEIAINITLDRDALKIRKLSENVYEIESKKVLNVVEKIPVSSLDNLWRINNKLKKLGVFELIKKHNVPEGATIKIGNFEFDWSDEE.

Residues 1 to 156 (MKFIDEVNVL…FALRLVLKVL (156 aa)) form the Obg domain. The region spanning 157–324 (ADVGLVGKPS…LKAAIFKMLE (168 aa)) is the OBG-type G domain. Residues 163 to 170 (GKPSAGKS), 188 to 192 (FTTLV), 209 to 212 (DLPG), 278 to 281 (NKSD), and 305 to 307 (SAL) contribute to the GTP site. Mg(2+) contacts are provided by Ser-170 and Thr-190. One can recognise an OCT domain in the interval 342–420 (NITLDRDALK…IGNFEFDWSD (79 aa)).

Belongs to the TRAFAC class OBG-HflX-like GTPase superfamily. OBG GTPase family. Monomer. Requires Mg(2+) as cofactor.

The protein localises to the cytoplasm. In terms of biological role, an essential GTPase which binds GTP, GDP and possibly (p)ppGpp with moderate affinity, with high nucleotide exchange rates and a fairly low GTP hydrolysis rate. Plays a role in control of the cell cycle, stress response, ribosome biogenesis and in those bacteria that undergo differentiation, in morphogenesis control. The chain is GTPase Obg from Metamycoplasma arthritidis (strain 158L3-1) (Mycoplasma arthritidis).